Consider the following 286-residue polypeptide: ATP synthase gamma chain (286 aa).

The protein belongs to the ATPase gamma chain family. In terms of assembly, F-type ATPases have 2 components, CF(1) - the catalytic core - and CF(0) - the membrane proton channel. CF(1) has five subunits: alpha(3), beta(3), gamma(1), delta(1), epsilon(1). CF(0) has three main subunits: a, b and c.

Its subcellular location is the cell inner membrane. Its function is as follows. Produces ATP from ADP in the presence of a proton gradient across the membrane. The gamma chain is believed to be important in regulating ATPase activity and the flow of protons through the CF(0) complex. This chain is ATP synthase gamma chain, found in Shewanella sp. (strain ANA-3).